A 437-amino-acid polypeptide reads, in one-letter code: Eukaryotic peptide chain release factor subunit 1 (437 aa).

An N-acetylalanine modification is found at Ala2. An NIKS motif; plays an important role in translational termination motif is present at residues 61–64 (NIKS). At Lys63 the chain carries 4-hydroxylysine. A Glycyl lysine isopeptide (Lys-Gly) (interchain with G-Cter in SUMO2) cross-link involves residue Lys87. The residue at position 185 (Gln185) is an N5-methylglutamine. Residue Thr347 is modified to Phosphothreonine. Lys404 participates in a covalent cross-link: Glycyl lysine isopeptide (Lys-Gly) (interchain with G-Cter in SUMO2).

The protein belongs to the eukaryotic release factor 1 family. As to quaternary structure, component of the eRF1-eRF3-GTP ternary complex, composed of ETF1/ERF1 and eRF3 (GSPT1/ERF3A or GSPT2/ERF3B) and GTP. Component of the transient SURF (SMG1-UPF1-eRF1-eRF3) complex. Interacts with JMJD4. The ETF1-GSPT1 complex interacts with JMJD4. Hydroxylation at Lys-63 by JMJD4 promotes its translational termination efficiency. Post-translationally, methylated at Gln-185 by N6AMT1. In terms of processing, ubiquitinated via 'Lys-6'-linked polyubiquitin chains by RNF14 and RNF25 in response to ribosome collisions (ribosome stalling), leading to its degradation by the proteasome and rescue of stalled ribosomes.

The protein resides in the cytoplasm. Component of the eRF1-eRF3-GTP ternary complex, a ternary complex that mediates translation termination in response to the termination codons. The eRF1-eRF3-GTP complex binds to a stop codon in the ribosomal A-site. ETF1/ERF1 is responsible for stop codon recognition and inducing hydrolysis of peptidyl-tRNA. Following GTP hydrolysis, eRF3 (GSPT1/ERF3A or GSPT2/ERF3B) dissociates, permitting ETF1/eRF1 to accommodate fully in the A-site, followed by hydrolysis of peptidyl-tRNA. Component of the transient SURF complex which recruits UPF1 to stalled ribosomes in the context of nonsense-mediated decay (NMD) of mRNAs containing premature stop codons. Required for SHFL-mediated translation termination which inhibits programmed ribosomal frameshifting (-1PRF) of mRNA from viruses and cellular genes. In Pongo abelii (Sumatran orangutan), this protein is Eukaryotic peptide chain release factor subunit 1 (ETF1).